The chain runs to 286 residues: 33 kDa chaperonin (286 aa).

Intrachain disulfides connect C233–C235 and C267–C270.

It belongs to the HSP33 family. In terms of processing, under oxidizing conditions two disulfide bonds are formed involving the reactive cysteines. Under reducing conditions zinc is bound to the reactive cysteines and the protein is inactive.

It localises to the cytoplasm. In terms of biological role, redox regulated molecular chaperone. Protects both thermally unfolding and oxidatively damaged proteins from irreversible aggregation. Plays an important role in the bacterial defense system toward oxidative stress. The protein is 33 kDa chaperonin of Histophilus somni (strain 2336) (Haemophilus somnus).